The sequence spans 683 residues: Cytochrome P450 monooxygenase htyF (683 aa).

Residues 8–28 (PALLAASVVLAVSLVSYVIQL) traverse the membrane as a helical segment. Asn-29 carries an N-linked (GlcNAc...) asparagine glycan. Cys-481 contributes to the heme binding site. The N-linked (GlcNAc...) asparagine glycan is linked to Asn-581. The helical transmembrane segment at 588 to 608 (LYVFVVLVACVAALFIGIGIY) threads the bilayer.

This sequence belongs to the cytochrome P450 family. It depends on heme as a cofactor.

The protein resides in the membrane. Its pathway is antifungal biosynthesis. Functionally, cytochrome P450 monooxygenase; part of the gene cluster that mediates the de novo generation of L-homotyrosine from acetyl-CoA and 4-hydroxyphenyl-pyruvate. L-homotyrosine is a building block of echinocandin B, a fungal lipidated cyclic hexapeptide that acts as an antifungal agent. L-homotyrosine 4-hydroxyphenyl-pyruvate first undergoes an aldol-type condensation by htyA with the C-2 of acetyl-CoA followed by the release of CoA to form 2-(4-hydroxybenzyl)-malate. This is followed by isomerization of 2-(4-hydroxy-benzyl)-malate to 3-(4-hydroxybenzyl)-malate by htyD. Thereafter, 3-(4-hydroxybenzyl)-malate undergoes decarboxylation and oxidation to form 2-oxo-4-(4-hydroxybenzyl)butanoic acid, coupled to reduction of NAD(+) to NADH by htyC. The product then undergoes transamination catalyzed by htyB to form L-homotyrosine. This Aspergillus rugulosus (Emericella rugulosa) protein is Cytochrome P450 monooxygenase htyF.